The chain runs to 566 residues: Urease subunit alpha (566 aa).

A Urease domain is found at 128 to 566 (GGIDTHIHFI…LPMAQRYFLF (439 aa)). Ni(2+) is bound by residues histidine 133, histidine 135, and lysine 216. Lysine 216 carries the post-translational modification N6-carboxylysine. Residue histidine 218 coordinates substrate. The Ni(2+) site is built by histidine 245 and histidine 271. The active-site Proton donor is the histidine 319. Aspartate 359 contacts Ni(2+).

Belongs to the metallo-dependent hydrolases superfamily. Urease alpha subunit family. As to quaternary structure, heterotrimer of UreA (gamma), UreB (beta) and UreC (alpha) subunits. Three heterotrimers associate to form the active enzyme. It depends on Ni cation as a cofactor. In terms of processing, carboxylation allows a single lysine to coordinate two nickel ions.

Its subcellular location is the cytoplasm. The catalysed reaction is urea + 2 H2O + H(+) = hydrogencarbonate + 2 NH4(+). Its pathway is nitrogen metabolism; urea degradation; CO(2) and NH(3) from urea (urease route): step 1/1. This is Urease subunit alpha from Pseudomonas fluorescens (strain Pf0-1).